The chain runs to 396 residues: Putative 3-phosphoinositide-dependent protein kinase 2 (396 aa).

The segment covering 1–11 (MVRTQTESSTP) has biased composition (polar residues). The disordered stretch occupies residues 1 to 53 (MVRTQTESSTPPGIPGGSRQGPAMDGTAAEPRPGAGSLQHAQPPPQPRKKRPE). In terms of domain architecture, Protein kinase spans 55–315 (FKFGKILGEG…YGPLKAHPFF (261 aa)). Residues 65–67 (SFS) and Lys-84 each bind ATP. The tract at residues 86–130 (LEKRHIIKENKVPYVTRERDVMSRLDHPFFVKLYFTFQDDEKLYF) is PIF-pocket. ATP is bound by residues 133–135 (SYA) and Glu-139. Asp-178 functions as the Proton acceptor in the catalytic mechanism. Positions 182 and 196 each coordinate ATP.

This sequence belongs to the protein kinase superfamily. AGC Ser/Thr protein kinase family. PDPK1 subfamily. In terms of processing, phosphorylated on tyrosine and serine/threonine.

Its subcellular location is the cytoplasm. It is found in the membrane. It carries out the reaction L-seryl-[protein] + ATP = O-phospho-L-seryl-[protein] + ADP + H(+). The enzyme catalyses L-threonyl-[protein] + ATP = O-phospho-L-threonyl-[protein] + ADP + H(+). Phosphorylates and activates not only PKB/AKT, but also PKA, PKC-zeta, RPS6KA1 and RPS6KB1. May play a general role in signaling processes and in development. In Homo sapiens (Human), this protein is Putative 3-phosphoinositide-dependent protein kinase 2.